The following is a 407-amino-acid chain: Immunoglobulin superfamily member 5 (407 aa).

Over 1 to 266 the chain is Extracellular; the sequence is MGQKERSTAD…LGFSLPTWGK (266 aa). Ig-like V-type domains lie at 39 to 139 and 142 to 231; these read NEVI…LTVQ and GELF…ATVN. N-linked (GlcNAc...) asparagine glycosylation is found at Asn59, Asn103, Asn210, and Asn231. 2 disulfides stabilise this stretch: Cys60–Cys123 and Cys163–Cys215. Residues 267–285 form a helical membrane-spanning segment; the sequence is VGLGLAGTMLLTPTCTLTI. At 286-407 the chain is on the cytoplasmic side; the sequence is RCCCCRRRCC…PEKVSNTTVV (122 aa). Positions 320 to 331 are enriched in basic and acidic residues; that stretch reads KSEKEKTNKETE. Residues 320–407 form a disordered region; sequence KSEKEKTNKE…PEKVSNTTVV (88 aa). Residues 389–407 are compositionally biased toward polar residues; it reads PQASFNLASPEKVSNTTVV.

Belongs to the immunoglobulin superfamily. Interacts with MAGI1 at tight junctions, forms a tripartite complex with NPHS1. Interacts with LNX1 isoform 2 via its PDZ 2 domain, it may also interact with other isoforms containing this domain.

It localises to the apical cell membrane. It is found in the cell junction. The protein localises to the tight junction. Its function is as follows. Provides, together with MAGI1, an adhesion machinery at tight junctions, which may regulate the permeability of kidney glomerulus and small intestinal epithelial cells. Mediates calcium-independent homophilic cell adhesion. In testis, it may function as a cell adhesion molecule rather than a tight-junction protein. It may participate in the adhesion between spermatogonia-spermatogonia, spermatogonia-Sertoli cells, and Sertoli cells-Sertoli cells. This chain is Immunoglobulin superfamily member 5 (IGSF5), found in Homo sapiens (Human).